The sequence spans 321 residues: UDP-N-acetylenolpyruvoylglucosamine reductase (321 aa).

Residues 36–203 enclose the FAD-binding PCMH-type domain; sequence FRAGGLAEVM…TGALFEGYPE (168 aa). Arg-183 is an active-site residue. Ser-232 functions as the Proton donor in the catalytic mechanism. Glu-302 is an active-site residue.

It belongs to the MurB family. FAD serves as cofactor.

It localises to the cytoplasm. The enzyme catalyses UDP-N-acetyl-alpha-D-muramate + NADP(+) = UDP-N-acetyl-3-O-(1-carboxyvinyl)-alpha-D-glucosamine + NADPH + H(+). It functions in the pathway cell wall biogenesis; peptidoglycan biosynthesis. Cell wall formation. This chain is UDP-N-acetylenolpyruvoylglucosamine reductase, found in Agrobacterium fabrum (strain C58 / ATCC 33970) (Agrobacterium tumefaciens (strain C58)).